A 445-amino-acid chain; its full sequence is Protein PRRC1 (445 aa).

2 disordered regions span residues 1–71 and 105–167; these read MMEE…PSAP and PPVS…TGLL. Polar residues predominate over residues 27–49; the sequence is MSSTPVPLAATSSFSSPNVSSME. A compositionally biased stretch (pro residues) spans 59 to 71; that stretch reads PQPPLPPVRPSAP. S209 and S408 each carry phosphoserine.

Belongs to the PRRC1 family. As to quaternary structure, interacts with PRKAR1A; resulting in PKA activation. In terms of tissue distribution, ubiquitously expressed with higher expression in kidney, liver and placenta. Detected in embryonic kidney cells (HEK293 cells) (at protein level). As to expression, specifically expressed in liver.

It is found in the golgi apparatus. The protein localises to the cytoplasm. May act as a regulator of the protein kinase A (PKA) activity during embryonic development. In Homo sapiens (Human), this protein is Protein PRRC1 (PRRC1).